A 100-amino-acid chain; its full sequence is ATP synthase subunit c (100 aa).

2 helical membrane-spanning segments follow: residues 30-50 (LLYL…GVGM) and 80-100 (AFIE…LFVV).

It belongs to the ATPase C chain family. As to quaternary structure, F-type ATPases have 2 components, F(1) - the catalytic core - and F(0) - the membrane proton channel. F(1) has five subunits: alpha(3), beta(3), gamma(1), delta(1), epsilon(1). F(0) has three main subunits: a(1), b(2) and c(10-14). The alpha and beta chains form an alternating ring which encloses part of the gamma chain. F(1) is attached to F(0) by a central stalk formed by the gamma and epsilon chains, while a peripheral stalk is formed by the delta and b chains.

The protein localises to the cell inner membrane. In terms of biological role, f(1)F(0) ATP synthase produces ATP from ADP in the presence of a proton or sodium gradient. F-type ATPases consist of two structural domains, F(1) containing the extramembraneous catalytic core and F(0) containing the membrane proton channel, linked together by a central stalk and a peripheral stalk. During catalysis, ATP synthesis in the catalytic domain of F(1) is coupled via a rotary mechanism of the central stalk subunits to proton translocation. Key component of the F(0) channel; it plays a direct role in translocation across the membrane. A homomeric c-ring of between 10-14 subunits forms the central stalk rotor element with the F(1) delta and epsilon subunits. The polypeptide is ATP synthase subunit c (Aquifex aeolicus (strain VF5)).